We begin with the raw amino-acid sequence, 879 residues long: Valine--tRNA ligase (879 aa).

The 'HIGH' region motif lies at 45–55; sequence PNVTGKLHLGH. A 'KMSKS' region motif is present at residues 521–525; the sequence is KMSKS. ATP is bound at residue Lys-524. The stretch at 806 to 879 forms a coiled coil; sequence LTELVNVDEE…ERMKELKESK (74 aa).

Belongs to the class-I aminoacyl-tRNA synthetase family. ValS type 1 subfamily. As to quaternary structure, monomer.

The protein localises to the cytoplasm. The catalysed reaction is tRNA(Val) + L-valine + ATP = L-valyl-tRNA(Val) + AMP + diphosphate. Functionally, catalyzes the attachment of valine to tRNA(Val). As ValRS can inadvertently accommodate and process structurally similar amino acids such as threonine, to avoid such errors, it has a 'posttransfer' editing activity that hydrolyzes mischarged Thr-tRNA(Val) in a tRNA-dependent manner. In Lactobacillus johnsonii (strain CNCM I-12250 / La1 / NCC 533), this protein is Valine--tRNA ligase.